Reading from the N-terminus, the 260-residue chain is MLAKRIIPCLDVDNGRVVKGVQFVDIKDAGDPVEVAKRYNEQGADEITFLDITATSDERDTTYHTVERMAETVFVPLTVGGGVRKIADIRNLLNAGADKVAINSAAVFTPEFVGEAAQKFGNQCIVVAIDAKRVADIEVDGIIMPRWEIFTHGGRKPTGIDAVAWARKMAELGAGELLVTSMDGDGTKKGYDLALMKQITSRVNVPVIASGGVGNLQHLAEGVLEGGVDAVLAASIFHFGEYTVQEAKAYMAAQGIQMRL.

Residues Asp11 and Asp130 contribute to the active site.

It belongs to the HisA/HisF family. In terms of assembly, heterodimer of HisH and HisF.

The protein localises to the cytoplasm. The enzyme catalyses 5-[(5-phospho-1-deoxy-D-ribulos-1-ylimino)methylamino]-1-(5-phospho-beta-D-ribosyl)imidazole-4-carboxamide + L-glutamine = D-erythro-1-(imidazol-4-yl)glycerol 3-phosphate + 5-amino-1-(5-phospho-beta-D-ribosyl)imidazole-4-carboxamide + L-glutamate + H(+). The protein operates within amino-acid biosynthesis; L-histidine biosynthesis; L-histidine from 5-phospho-alpha-D-ribose 1-diphosphate: step 5/9. IGPS catalyzes the conversion of PRFAR and glutamine to IGP, AICAR and glutamate. The HisF subunit catalyzes the cyclization activity that produces IGP and AICAR from PRFAR using the ammonia provided by the HisH subunit. The chain is Imidazole glycerol phosphate synthase subunit HisF from Psychrobacter arcticus (strain DSM 17307 / VKM B-2377 / 273-4).